Consider the following 354-residue polypeptide: Phenylalanine--tRNA ligase alpha subunit (354 aa).

Glu-279 contacts Mg(2+).

The protein belongs to the class-II aminoacyl-tRNA synthetase family. Phe-tRNA synthetase alpha subunit type 1 subfamily. As to quaternary structure, tetramer of two alpha and two beta subunits. Mg(2+) is required as a cofactor.

The protein localises to the cytoplasm. It catalyses the reaction tRNA(Phe) + L-phenylalanine + ATP = L-phenylalanyl-tRNA(Phe) + AMP + diphosphate + H(+). The protein is Phenylalanine--tRNA ligase alpha subunit of Cupriavidus pinatubonensis (strain JMP 134 / LMG 1197) (Cupriavidus necator (strain JMP 134)).